The primary structure comprises 332 residues: Protein pelota homolog (332 aa).

It belongs to the eukaryotic release factor 1 family. Pelota subfamily. As to quaternary structure, monomer. The cofactor is a divalent metal cation.

The protein localises to the cytoplasm. May function in recognizing stalled ribosomes, interact with stem-loop structures in stalled mRNA molecules, and effect endonucleolytic cleavage of the mRNA. May play a role in the release non-functional ribosomes and degradation of damaged mRNAs. Has endoribonuclease activity. The sequence is that of Protein pelota homolog from Pyrobaculum aerophilum (strain ATCC 51768 / DSM 7523 / JCM 9630 / CIP 104966 / NBRC 100827 / IM2).